The primary structure comprises 246 residues: Chaperone protein SefB (246 aa).

Positions 1-24 (MYILNKFIRRTVIFFFFCYLPIAS) are cleaved as a signal peptide. Cys-124 and Cys-155 are oxidised to a cystine.

Belongs to the periplasmic pilus chaperone family.

It localises to the periplasm. In terms of biological role, required for the biogenesis of the SefA (SEF14) fimbria. In Salmonella enteritidis, this protein is Chaperone protein SefB (sefB).